The sequence spans 950 residues: Protocadherin alpha-13 (950 aa).

The first 29 residues, 1–29, serve as a signal peptide directing secretion; the sequence is MLSSWQGGPRPRQLLLWLLILAAWETGSG. The Extracellular segment spans residues 30–697; it reads QLHYSVPEEA…GPEAALVDVN (668 aa). Cadherin domains lie at 34–133, 134–242, 243–350, 351–455, 456–565, and 581–678; these read SVPE…PPIF, PESK…APEF, YQSV…APEV, TITS…APAF, AQPE…APAL, and MPRS…APQA. N-linked (GlcNAc...) asparagine glycosylation is found at Asn-257 and Asn-265. Asn-548 is a glycosylation site (N-linked (GlcNAc...) asparagine). Residues 698–718 form a helical membrane-spanning segment; sequence VYLIIAICAVSSLLVLTLLLY. The Cytoplasmic portion of the chain corresponds to 719-950; the sequence is TALRCSAPPT…GNSTTDNSDQ (232 aa). 6 PXXP repeats span residues 734–737, 774–777, 799–802, 832–835, 873–876, and 891–894; these read PGKP, PSLP, PRQP, PGGP, PGNP, and PGSP. The tract at residues 734 to 894 is 6 X 4 AA repeats of P-X-X-P; it reads PGKPTLVCSS…PDKFIIPGSP (161 aa). Disordered regions lie at residues 780–806 and 829–950; these read LGSA…NPDW and RAGP…NSDQ. The span at 787-800 shows a compositional bias: basic and acidic residues; it reads GQREEDSECLKEPR. Basic and acidic residues predominate over residues 909–923; the sequence is DKSDFITFGKKEETK.

It is found in the cell membrane. Its function is as follows. Potential calcium-dependent cell-adhesion protein. May be involved in the establishment and maintenance of specific neuronal connections in the brain. The chain is Protocadherin alpha-13 (PCDHA13) from Homo sapiens (Human).